Here is a 159-residue protein sequence, read N- to C-terminus: SsrA-binding protein (159 aa).

It belongs to the SmpB family.

It is found in the cytoplasm. Its function is as follows. Required for rescue of stalled ribosomes mediated by trans-translation. Binds to transfer-messenger RNA (tmRNA), required for stable association of tmRNA with ribosomes. tmRNA and SmpB together mimic tRNA shape, replacing the anticodon stem-loop with SmpB. tmRNA is encoded by the ssrA gene; the 2 termini fold to resemble tRNA(Ala) and it encodes a 'tag peptide', a short internal open reading frame. During trans-translation Ala-aminoacylated tmRNA acts like a tRNA, entering the A-site of stalled ribosomes, displacing the stalled mRNA. The ribosome then switches to translate the ORF on the tmRNA; the nascent peptide is terminated with the 'tag peptide' encoded by the tmRNA and targeted for degradation. The ribosome is freed to recommence translation, which seems to be the essential function of trans-translation. This is SsrA-binding protein from Acidiphilium cryptum (strain JF-5).